Reading from the N-terminus, the 170-residue chain is Adenine phosphoribosyltransferase (170 aa).

It belongs to the purine/pyrimidine phosphoribosyltransferase family. In terms of assembly, homodimer.

The protein localises to the cytoplasm. The enzyme catalyses AMP + diphosphate = 5-phospho-alpha-D-ribose 1-diphosphate + adenine. It participates in purine metabolism; AMP biosynthesis via salvage pathway; AMP from adenine: step 1/1. Its function is as follows. Catalyzes a salvage reaction resulting in the formation of AMP, that is energically less costly than de novo synthesis. This is Adenine phosphoribosyltransferase from Lactococcus lactis subsp. lactis (strain IL1403) (Streptococcus lactis).